Reading from the N-terminus, the 888-residue chain is 3-hydroxy-3-methylglutaryl-coenzyme A reductase (888 aa).

The Cytoplasmic portion of the chain corresponds to 1 to 9 (MLSRLFRMH). The chain crosses the membrane as a helical span at residues 10–39 (GLFVASHPWEVIVGTVTLTICMMSMNMFTG). Residues 40 to 56 (NNKICGWNYECPKFEED) lie on the Lumenal side of the membrane. Residues 57 to 78 (VLSSDIIILTITRCIAILYIYF) traverse the membrane as a helical segment. The region spanning 61-218 (DIIILTITRC…MTFFPACVSL (158 aa)) is the SSD domain. Residues 75–78 (YIYF) carry the INSIG-binding motif motif. Residues 79–89 (QFQNLRQLGSK) are Cytoplasmic-facing. Residue K89 forms a Glycyl lysine isopeptide (Lys-Gly) (interchain with G-Cter in ubiquitin) linkage. Residues 90-114 (YILGIAGLFTIFSSFVFSTVVIHFL) form a helical membrane-spanning segment. The Lumenal segment spans residues 115–123 (DKELTGLNE). The chain crosses the membrane as a helical span at residues 124-149 (ALPFFLLLIDLSRASTLAKFALSSNS). At 150–159 (QDEVRENIAR) the chain is on the cytoplasmic side. The helical transmembrane segment at 160–187 (GMAILGPTFTLDALVECLVIGVGTMSGV) threads the bilayer. The Lumenal segment spans residues 188–191 (RQLE). Residues 192-220 (IMCCFGCMSVLANYFVFMTFFPACVSLVL) form a helical membrane-spanning segment. Over 221 to 248 (ELSRESREGRPIWLLSHFARVLEEEENK) the chain is Cytoplasmic. K248 is covalently cross-linked (Glycyl lysine isopeptide (Lys-Gly) (interchain with G-Cter in ubiquitin)). A helical membrane pass occupies residues 249-275 (PNPVTQRVKMIMSLGLVLVHAHSRWIA). Over 276–314 (DPSPQNSTADTSKVSLGLDENVSKRIEPSVSLWQFYLSK) the chain is Lumenal. N281 and N296 each carry an N-linked (GlcNAc...) asparagine glycan. The chain crosses the membrane as a helical span at residues 315–339 (MISMDIEQVITLSLALLLAVKYIFF). Over 340-888 (EQTETESTLS…LQGACTKKTA (549 aa)) the chain is Cytoplasmic. Active-site charge relay system residues include E559, K691, and D767. The Proton donor role is filled by H866. S872 is modified (phosphoserine; by AMPK).

The protein belongs to the HMG-CoA reductase family. In terms of assembly, homotetramer. Homodimer. Interacts (via its SSD) with INSIG1; the interaction, accelerated by sterols, leads to the recruitment of HMGCR to AMFR/gp78 for its ubiquitination by the sterol-mediated ERAD pathway. Interacts with UBIAD1. In terms of processing, undergoes sterol-mediated ubiquitination and ER-associated degradation (ERAD). Accumulation of sterols in the endoplasmic reticulum (ER) membrane, triggers binding of the reductase to the ER membrane protein INSIG1 or INSIG2. The INSIG1 binding leads to the recruitment of the ubiquitin ligase, AMFR/gp78, RNF139 or RNF145, initiating ubiquitination of the reductase. The ubiquitinated reductase is then extracted from the ER membrane and delivered to cytosolic 26S proteosomes by a mechanism probably mediated by the ATPase Valosin-containing protein VCP/p97. The INSIG2-binding leads to the recruitment of the ubiquitin ligase RNF139, initiating ubiquitination of the reductase. Lys-248 is the main site of ubiquitination. Ubiquitination is enhanced by the presence of a geranylgeranylated protein. N-glycosylated. Deglycosylated by NGLY1 on release from the endoplasmic reticulum (ER) in a sterol-mediated manner. Post-translationally, phosphorylated. Phosphorylation at Ser-872 reduces the catalytic activity.

It is found in the endoplasmic reticulum membrane. It localises to the peroxisome membrane. The enzyme catalyses (R)-mevalonate + 2 NADP(+) + CoA = (3S)-3-hydroxy-3-methylglutaryl-CoA + 2 NADPH + 2 H(+). It functions in the pathway metabolic intermediate biosynthesis; (R)-mevalonate biosynthesis; (R)-mevalonate from acetyl-CoA: step 3/3. Regulated by a negative feedback mechanism through sterols and non-sterol metabolites derived from mevalonate. Phosphorylation at Ser-872 down-regulates the catalytic activity. Functionally, catalyzes the conversion of (3S)-hydroxy-3-methylglutaryl-CoA (HMG-CoA) to mevalonic acid, the rate-limiting step in the synthesis of cholesterol and other isoprenoids, thus plays a critical role in cellular cholesterol homeostasis. The chain is 3-hydroxy-3-methylglutaryl-coenzyme A reductase (HMGCR) from Pongo abelii (Sumatran orangutan).